Reading from the N-terminus, the 223-residue chain is 3,4-dihydroxy-2-butanone 4-phosphate synthase (223 aa).

Residues 39-40 (RE), D44, 152-156 (RRGHT), and E176 each bind D-ribulose 5-phosphate. Position 40 (E40) interacts with Mg(2+). H155 serves as a coordination point for Mg(2+).

It belongs to the DHBP synthase family. As to quaternary structure, homodimer. Mg(2+) is required as a cofactor. Mn(2+) serves as cofactor.

The enzyme catalyses D-ribulose 5-phosphate = (2S)-2-hydroxy-3-oxobutyl phosphate + formate + H(+). Its pathway is cofactor biosynthesis; riboflavin biosynthesis; 2-hydroxy-3-oxobutyl phosphate from D-ribulose 5-phosphate: step 1/1. In terms of biological role, catalyzes the conversion of D-ribulose 5-phosphate to formate and 3,4-dihydroxy-2-butanone 4-phosphate. In Desulfovibrio desulfuricans (strain ATCC 27774 / DSM 6949 / MB), this protein is 3,4-dihydroxy-2-butanone 4-phosphate synthase.